The sequence spans 126 residues: Large ribosomal subunit protein bL17 (126 aa).

Belongs to the bacterial ribosomal protein bL17 family. In terms of assembly, part of the 50S ribosomal subunit. Contacts protein L32.

The sequence is that of Large ribosomal subunit protein bL17 from Coxiella burnetii (strain CbuK_Q154) (Coxiella burnetii (strain Q154)).